Here is a 229-residue protein sequence, read N- to C-terminus: MSEEQKLPKEPPILLPGAADFTEEQIEAARVFFAQPVSFIMGAVRMDAMPPSDLPEVAFAGRSNVGKSSLINGLVNQKYLARASNEPGRTREINFFLLAEKVRLVDLPGYGFARVSRSIADKFQDLGRAYLRGRANLKRVYVLIDARHGLKKVDLEALDALDVAAVSYQIVLTKADKIKPAEVDKVVAETQKAIAKRAAAFPRVLATSSEKGLGMPELRAEIVRLCIDE.

Residues 53-228 form the EngB-type G domain; it reads DLPEVAFAGR…RAEIVRLCID (176 aa). Residues 61–68, 88–92, 106–109, 173–176, and 207–209 each bind GTP; these read GRSNVGKS, GRTRE, DLPG, TKAD, and TSS. Residues Ser-68 and Thr-90 each coordinate Mg(2+).

This sequence belongs to the TRAFAC class TrmE-Era-EngA-EngB-Septin-like GTPase superfamily. EngB GTPase family. Mg(2+) is required as a cofactor.

In terms of biological role, necessary for normal cell division and for the maintenance of normal septation. The sequence is that of Probable GTP-binding protein EngB from Caulobacter vibrioides (strain NA1000 / CB15N) (Caulobacter crescentus).